Reading from the N-terminus, the 150-residue chain is 3-hydroxyacyl-[acyl-carrier-protein] dehydratase FabZ (150 aa).

The active site involves His-52.

This sequence belongs to the thioester dehydratase family. FabZ subfamily.

The protein resides in the cytoplasm. It catalyses the reaction a (3R)-hydroxyacyl-[ACP] = a (2E)-enoyl-[ACP] + H2O. Functionally, involved in unsaturated fatty acids biosynthesis. Catalyzes the dehydration of short chain beta-hydroxyacyl-ACPs and long chain saturated and unsaturated beta-hydroxyacyl-ACPs. This chain is 3-hydroxyacyl-[acyl-carrier-protein] dehydratase FabZ, found in Variovorax paradoxus (strain S110).